We begin with the raw amino-acid sequence, 262 residues long: Phosphate import ATP-binding protein PstB 2 (262 aa).

The region spanning 18–257 (FVVRNLDLFY…PSDRRTEDYI (240 aa)) is the ABC transporter domain. 50–57 (GPSGCGKS) provides a ligand contact to ATP.

Belongs to the ABC transporter superfamily. Phosphate importer (TC 3.A.1.7) family. In terms of assembly, the complex is composed of two ATP-binding proteins (PstB), two transmembrane proteins (PstC and PstA) and a solute-binding protein (PstS).

The protein localises to the cell membrane. It carries out the reaction phosphate(out) + ATP + H2O = ADP + 2 phosphate(in) + H(+). Part of the ABC transporter complex PstSACB involved in phosphate import. Responsible for energy coupling to the transport system. The sequence is that of Phosphate import ATP-binding protein PstB 2 from Symbiobacterium thermophilum (strain DSM 24528 / JCM 14929 / IAM 14863 / T).